The following is a 444-amino-acid chain: Zeaxanthin 4-ketolase (444 aa).

Residues 408–444 (VAGGSSSGGGGEGGKPGAGEHGLLQRQRQLAPVGVMA) are disordered. Positions 412-427 (SSSGGGGEGGKPGAGE) are enriched in gly residues.

It catalyses the reaction all-trans-adonixanthin + 2 AH2 + 2 O2 = all-trans-(3S,3'S)-astaxanthin + 2 A + 3 H2O. The enzyme catalyses all-trans-zeaxanthin + 2 AH2 + 2 O2 = all-trans-adonixanthin + 2 A + 3 H2O. The catalysed reaction is echinenone + 2 AH2 + 2 O2 = canthaxanthin + 2 A + 3 H2O. It carries out the reaction all-trans-beta-carotene + 2 AH2 + 2 O2 = echinenone + 2 A + 3 H2O. It participates in carotenoid biosynthesis; astaxanthin biosynthesis. Its function is as follows. Involved in the biosynthesis of ketocarotenoids which are powerful anti-oxidative molecules. Catalyzes the conversion of zeaxanthin to astaxanthin via adonixanthin. Catalyzes the conversion of beta-carotene to canthaxanthin via echinenone. The chain is Zeaxanthin 4-ketolase from Chlamydomonas reinhardtii (Chlamydomonas smithii).